A 229-amino-acid polypeptide reads, in one-letter code: MQDEDGYITLNIKTRKPALISVGSASSSWWRVMALILLILCVGMVVGLVALGIWSVMQRNYLQGENENRTGTLQQLAKRFCQYVVKQSELKGTFKGHKCSPCDTNWRYYGDSCYGFFRHNLTWEESKQYCTDMNATLLKIDNRNIVEYIKARTHLIRWVGLSRQKSNEVWKWEDGSVISENMFEFLEDGKGNMNCAYFHNGKMHPTFCENKHYLMCERKAGMTKVDQLP.

The Cytoplasmic segment spans residues 1–33 (MQDEDGYITLNIKTRKPALISVGSASSSWWRVM). Residue Y7 is modified to Phosphotyrosine. The ITAM motif lies at 7–10 (YITL). Residues 34 to 54 (ALILLILCVGMVVGLVALGIW) traverse the membrane as a helical; Signal-anchor for type II membrane protein segment. The Extracellular portion of the chain corresponds to 55 to 229 (SVMQRNYLQG…AGMTKVDQLP (175 aa)). N68 carries N-linked (GlcNAc...) asparagine glycosylation. Residues C102 and C113 are joined by a disulfide bond. The region spanning 109-217 (YGDSCYGFFR…CENKHYLMCE (109 aa)) is the C-type lectin domain. 2 N-linked (GlcNAc...) asparagine glycosylation sites follow: N120 and N134. 2 disulfide bridges follow: C130/C216 and C195/C208.

As to quaternary structure, homodimer. Interacts (via cytoplasmic domain) with RACK1; promotes CLEC1B ubiquitination and proteasome-mediated degradation. Interacts (dimer) with SYK (via SH2 domains). Interacts with PDPN; the interaction is independent of CLEC1B glycosylation and activates CLEC1B. In terms of processing, glycosylated. Post-translationally, phosphorylated on tyrosine residue in response to rhodocytin binding. As to expression, expressed preferentially in the liver. Also expressed in immune cells of myeloid origin and on the surface of platelets.

The protein resides in the membrane. C-type lectin-like receptor that functions as a platelet receptor for the lymphatic endothelial marker, PDPN. After ligand activation, signals via sequential activation of SRC and SYK tyrosine kinases leading to activation of PLCG2. Its function is as follows. (Microbial infection) Acts as a receptor for the platelet-aggregating snake venom protein rhodocytin. Rhodocytin binding leads to tyrosine phosphorylation and this promotes the binding of spleen tyrosine kinase (SYK) and initiation of downstream tyrosine phosphorylation events and activation of PLCG2. Functionally, (Microbial infection) Acts as an attachment factor for Human immunodeficiency virus type 1 (HIV-1) and facilitates its capture by platelets. The sequence is that of C-type lectin domain family 1 member B (CLEC1B) from Homo sapiens (Human).